The following is a 172-amino-acid chain: Large ribosomal subunit protein uL10 (172 aa).

Belongs to the universal ribosomal protein uL10 family. As to quaternary structure, part of the ribosomal stalk of the 50S ribosomal subunit. The N-terminus interacts with L11 and the large rRNA to form the base of the stalk. The C-terminus forms an elongated spine to which L12 dimers bind in a sequential fashion forming a multimeric L10(L12)X complex.

Forms part of the ribosomal stalk, playing a central role in the interaction of the ribosome with GTP-bound translation factors. This chain is Large ribosomal subunit protein uL10, found in Rhizobium etli (strain CIAT 652).